The chain runs to 710 residues: E3 ubiquitin-protein ligase TRIM9 (710 aa).

The RING-type zinc finger occupies 10 to 50; it reads CPVCGSFYREPIILPCSHNLCQACARNILVQTPESESPQSH. Thr41 carries the post-translational modification Phosphothreonine. Ser44, Ser46, and Ser49 each carry phosphoserine. 2 consecutive B box-type zinc fingers follow at residues 163-212 and 224-266; these read AAAL…LVPP and RKVS…VKAL. The Zn(2+) site is built by Cys168, Cys171, Cys193, His198, Cys229, His232, Cys252, and His258. Residues 273–340 adopt a coiled-coil conformation; it reads HKSQLSQALN…KAQLLARVNK (68 aa). The COS domain maps to 374-432; that stretch reads IKENDPSGFLQISDALIRRVHLTEDQWGKGTLTPRMTTDFDLSLDNSPLLQSIHQLDFV. Residues 440-535 form the Fibronectin type-III domain; sequence VPATPILQLE…KTLVLQTSEV (96 aa). The B30.2/SPRY domain maps to 533–702; sequence SEVAWFAFDP…LHTGLPVPDF (170 aa).

Belongs to the TRIM/RBCC family. Interacts with SNAP25. Auto-ubiquitinated. Poly-ubiquitinated in cultured cells, whereas it is monoubiquitinated in vitro. As to expression, brain. Highly expressed in the cerebral cortex (at protein level). Severely decreased in the affected brain areas in Parkinson disease and dementia with Lewy bodies.

It is found in the cytoplasm. Its subcellular location is the cell projection. The protein resides in the dendrite. It localises to the cytoplasmic vesicle. The protein localises to the secretory vesicle. It is found in the synaptic vesicle. Its subcellular location is the synapse. The protein resides in the cytoskeleton. The catalysed reaction is S-ubiquitinyl-[E2 ubiquitin-conjugating enzyme]-L-cysteine + [acceptor protein]-L-lysine = [E2 ubiquitin-conjugating enzyme]-L-cysteine + N(6)-ubiquitinyl-[acceptor protein]-L-lysine.. The protein operates within protein modification; protein ubiquitination. Its function is as follows. E3 ubiquitin-protein ligase which ubiquitinates itself in cooperation with an E2 enzyme UBE2D2/UBC4 and serves as a targeting signal for proteasomal degradation. May play a role in regulation of neuronal functions and may also participate in the formation or breakdown of abnormal inclusions in neurodegenerative disorders. May act as a regulator of synaptic vesicle exocytosis by controlling the availability of SNAP25 for the SNARE complex formation. This chain is E3 ubiquitin-protein ligase TRIM9 (TRIM9), found in Homo sapiens (Human).